The chain runs to 324 residues: MFTTALAQRENTQLGELPLDLFAAIQSLKKELNAVILAHYYQEPDIQDIADFIGDSLQLARAAEKTNADVIVFAGVHFMAETAKILNPDKLVLLPDLNAGCSLADSCPPEAFAAFKAAHPDHLVVSYINCSADIKAMSDIICTSSNAVKIVQQIPKEQPIIFAPDRNLGRYVMEQTGRDLVLWQGSCVVHETFSEKKIVQLKIAHPEAEAIAHPECESSVLRHASFIGSTAALLKYCQNSPTKEFIVATEPGIIHQMQKLAPDKHFIPAPPMNNCACNECPFMRLNTLEKLYWAMKNRTPEITMLEDIRLAALRPMQRMLEMSV.

His39 and Ser56 together coordinate iminosuccinate. Residue Cys101 coordinates [4Fe-4S] cluster. Iminosuccinate-binding positions include 127 to 129 (YIN) and Ser144. Cys187 is a binding site for [4Fe-4S] cluster. Residues 213-215 (HPE) and Thr230 each bind iminosuccinate. Cys280 is a binding site for [4Fe-4S] cluster.

Belongs to the quinolinate synthase family. Type 2 subfamily. [4Fe-4S] cluster is required as a cofactor.

It is found in the cytoplasm. The catalysed reaction is iminosuccinate + dihydroxyacetone phosphate = quinolinate + phosphate + 2 H2O + H(+). It functions in the pathway cofactor biosynthesis; NAD(+) biosynthesis; quinolinate from iminoaspartate: step 1/1. In terms of biological role, catalyzes the condensation of iminoaspartate with dihydroxyacetone phosphate to form quinolinate. In Nostoc punctiforme (strain ATCC 29133 / PCC 73102), this protein is Quinolinate synthase.